We begin with the raw amino-acid sequence, 511 residues long: Endoglucanase B (511 aa).

An N-terminal signal peptide occupies residues 1–29 (MNLLSGWVRPLMLGCGLLGAALSAGSIQA). The 101-residue stretch at 30 to 130 (AVCEYRVTNE…AVTGAICGGQ (101 aa)) folds into the CBM2 domain. Cysteine 32 and cysteine 127 are oxidised to a cystine. The tract at residues 137–173 (SVASSSSSSSVVSSTPRSSSSSVSSSVPGTSSSSSSS) is disordered. Residues 180 to 209 (ACNWYGTLTPLCNNTSNGWGYEDGRSCVAR) enclose the CBM10 domain. Cystine bridges form between cysteine 181–cysteine 212 and cysteine 191–cysteine 206. Aspartate 276 functions as the Nucleophile in the catalytic mechanism. Aspartate 393 serves as the catalytic Proton donor.

Belongs to the glycosyl hydrolase 45 (cellulase K) family.

Its subcellular location is the periplasm. The catalysed reaction is Endohydrolysis of (1-&gt;4)-beta-D-glucosidic linkages in cellulose, lichenin and cereal beta-D-glucans.. In terms of biological role, this enzyme catalyzes the endohydrolysis of 1,4-beta-glucosidic linkages in cellulose, lichenin and cereal beta-D-glucans. EGB is most active against barley beta-glucan, but showed significant activity against amorphous and crystalline cellulose. In Cellvibrio japonicus (strain Ueda107) (Pseudomonas fluorescens subsp. cellulosa), this protein is Endoglucanase B (celB).